Here is a 573-residue protein sequence, read N- to C-terminus: 60 kDa heat shock protein, mitochondrial (573 aa).

The transit peptide at 1–26 (MLRLPTVLRQMRPVSRALAPHLTRAY) directs the protein to the mitochondrion. Position 31 is an N6-succinyllysine (lysine 31). Residues serine 67 and serine 70 each carry the phosphoserine modification. Residue lysine 75 coordinates ATP. Lysine 75 bears the N6-acetyllysine mark. N6-acetyllysine; alternate is present on lysine 82. At lysine 82 the chain carries N6-succinyllysine; alternate. Lysine 87 bears the N6-acetyllysine mark. Tyrosine 90 bears the Phosphotyrosine mark. Position 91 is an N6-acetyllysine (lysine 91). An ATP-binding site is contributed by 111 to 115 (DGTTT). Lysine 125 is subject to N6-acetyllysine; alternate. Position 125 is an N6-succinyllysine; alternate (lysine 125). Lysine 130 carries the post-translational modification N6-acetyllysine. Lysine 133 bears the N6-acetyllysine; alternate mark. The residue at position 133 (lysine 133) is an N6-succinyllysine; alternate. Lysine 133 is subject to N6-malonyllysine; alternate. The residue at position 156 (lysine 156) is an N6-acetyllysine. Lysine 191, lysine 202, lysine 205, lysine 218, and lysine 236 each carry N6-acetyllysine; alternate. N6-succinyllysine; alternate is present on residues lysine 191, lysine 202, lysine 205, lysine 218, and lysine 236. Lysine 249 carries the post-translational modification N6-acetyllysine. Position 250 is an N6-acetyllysine; alternate (lysine 250). Position 250 is an N6-succinyllysine; alternate (lysine 250). N6-acetyllysine occurs at positions 269 and 292. Lysine 301 bears the N6-succinyllysine mark. Lysine 314 is modified (N6-acetyllysine). Lysine 352 is modified (N6-acetyllysine; alternate). Lysine 352 is subject to N6-succinyllysine; alternate. Lysine 359 and lysine 389 each carry N6-acetyllysine. At lysine 396 the chain carries N6-acetyllysine; alternate. At lysine 396 the chain carries N6-succinyllysine; alternate. A Phosphoserine modification is found at serine 410. Glycine 440 lines the ATP pocket. N6-acetyllysine; alternate is present on lysine 455. Lysine 455 bears the N6-succinyllysine; alternate mark. At lysine 469 the chain carries N6-acetyllysine. An N6-acetyllysine; alternate modification is found at lysine 481. Lysine 481 bears the N6-succinyllysine; alternate mark. Position 488 is a phosphoserine (serine 488). Aspartate 520 provides a ligand contact to ATP. A Glycyl lysine isopeptide (Lys-Gly) (interchain with G-Cter in SUMO2) cross-link involves residue lysine 551.

This sequence belongs to the chaperonin (HSP60) family. In terms of assembly, homoheptamer arranged in a ring structure. The functional units of these chaperonins consist of heptameric rings of the large subunit Hsp60, which function as a back-to-back double ring. Interacts with 2 heptameric Hsp10 rings to form the symmetrical football complex. Interacts with HRAS. Interacts with ATAD3A. Interacts with ETFBKMT and EEF1AKMT3. Interacts with MFHAS1.

The protein localises to the mitochondrion matrix. It carries out the reaction ATP + H2O + a folded polypeptide = ADP + phosphate + an unfolded polypeptide.. Functionally, chaperonin implicated in mitochondrial protein import and macromolecular assembly. Together with Hsp10, facilitates the correct folding of imported proteins. May also prevent misfolding and promote the refolding and proper assembly of unfolded polypeptides generated under stress conditions in the mitochondrial matrix. The functional units of these chaperonins consist of heptameric rings of the large subunit Hsp60, which function as a back-to-back double ring. In a cyclic reaction, Hsp60 ring complexes bind one unfolded substrate protein per ring, followed by the binding of ATP and association with 2 heptameric rings of the co-chaperonin Hsp10. This leads to sequestration of the substrate protein in the inner cavity of Hsp60 where, for a certain period of time, it can fold undisturbed by other cell components. Synchronous hydrolysis of ATP in all Hsp60 subunits results in the dissociation of the chaperonin rings and the release of ADP and the folded substrate protein. The protein is 60 kDa heat shock protein, mitochondrial (Hspd1) of Rattus norvegicus (Rat).